A 180-amino-acid chain; its full sequence is Nucleoside-triphosphatase THEP1 (180 aa).

ATP contacts are provided by residues 8–15 (GPVGSIKA) and 100–107 (VIIIDELG).

This sequence belongs to the THEP1 NTPase family.

The enzyme catalyses a ribonucleoside 5'-triphosphate + H2O = a ribonucleoside 5'-diphosphate + phosphate + H(+). In terms of biological role, has nucleotide phosphatase activity towards ATP, GTP, CTP, TTP and UTP. May hydrolyze nucleoside diphosphates with lower efficiency. This Picrophilus torridus (strain ATCC 700027 / DSM 9790 / JCM 10055 / NBRC 100828 / KAW 2/3) protein is Nucleoside-triphosphatase THEP1.